We begin with the raw amino-acid sequence, 155 residues long: 6,7-dimethyl-8-ribityllumazine synthase (155 aa).

5-amino-6-(D-ribitylamino)uracil-binding positions include Tyr-23, 57-59 (AWE), and 81-83 (CVI). 86–87 (ET) provides a ligand contact to (2S)-2-hydroxy-3-oxobutyl phosphate. The Proton donor role is filled by His-89. Phe-114 serves as a coordination point for 5-amino-6-(D-ribitylamino)uracil. Arg-128 is a (2S)-2-hydroxy-3-oxobutyl phosphate binding site.

This sequence belongs to the DMRL synthase family.

It catalyses the reaction (2S)-2-hydroxy-3-oxobutyl phosphate + 5-amino-6-(D-ribitylamino)uracil = 6,7-dimethyl-8-(1-D-ribityl)lumazine + phosphate + 2 H2O + H(+). Its pathway is cofactor biosynthesis; riboflavin biosynthesis; riboflavin from 2-hydroxy-3-oxobutyl phosphate and 5-amino-6-(D-ribitylamino)uracil: step 1/2. Its function is as follows. Catalyzes the formation of 6,7-dimethyl-8-ribityllumazine by condensation of 5-amino-6-(D-ribitylamino)uracil with 3,4-dihydroxy-2-butanone 4-phosphate. This is the penultimate step in the biosynthesis of riboflavin. The chain is 6,7-dimethyl-8-ribityllumazine synthase from Rhodopirellula baltica (strain DSM 10527 / NCIMB 13988 / SH1).